The sequence spans 377 residues: Succinyl-diaminopimelate desuccinylase 2 (377 aa).

A Zn(2+)-binding site is contributed by His-62. The active site involves Asp-64. Residue Asp-95 coordinates Zn(2+). Residue Glu-129 is the Proton acceptor of the active site. Residues Glu-130, Glu-158, and His-350 each contribute to the Zn(2+) site.

It belongs to the peptidase M20A family. DapE subfamily. In terms of assembly, homodimer. It depends on Zn(2+) as a cofactor. Requires Co(2+) as cofactor.

The catalysed reaction is N-succinyl-(2S,6S)-2,6-diaminopimelate + H2O = (2S,6S)-2,6-diaminopimelate + succinate. It participates in amino-acid biosynthesis; L-lysine biosynthesis via DAP pathway; LL-2,6-diaminopimelate from (S)-tetrahydrodipicolinate (succinylase route): step 3/3. Functionally, catalyzes the hydrolysis of N-succinyl-L,L-diaminopimelic acid (SDAP), forming succinate and LL-2,6-diaminopimelate (DAP), an intermediate involved in the bacterial biosynthesis of lysine and meso-diaminopimelic acid, an essential component of bacterial cell walls. In Shewanella loihica (strain ATCC BAA-1088 / PV-4), this protein is Succinyl-diaminopimelate desuccinylase 2.